Here is a 231-residue protein sequence, read N- to C-terminus: Thymidylate kinase (231 aa).

Position 10-17 (Gly-10–Thr-17) interacts with ATP.

Belongs to the thymidylate kinase family.

The catalysed reaction is dTMP + ATP = dTDP + ADP. Functionally, phosphorylation of dTMP to form dTDP in both de novo and salvage pathways of dTTP synthesis. The polypeptide is Thymidylate kinase (Acaryochloris marina (strain MBIC 11017)).